The sequence spans 113 residues: Large ribosomal subunit protein uL24 (113 aa).

Residues 48–70 (HRKRVTNDKGTSSGGLEKRESPM) form a disordered region.

The protein belongs to the universal ribosomal protein uL24 family. As to quaternary structure, part of the 50S ribosomal subunit.

In terms of biological role, one of two assembly initiator proteins, it binds directly to the 5'-end of the 23S rRNA, where it nucleates assembly of the 50S subunit. One of the proteins that surrounds the polypeptide exit tunnel on the outside of the subunit. This chain is Large ribosomal subunit protein uL24, found in Tropheryma whipplei (strain TW08/27) (Whipple's bacillus).